The primary structure comprises 739 residues: Lysyl oxidase homolog 3A (739 aa).

The N-terminal stretch at Met-1–Ser-25 is a signal peptide. SRCR domains lie at Phe-38–Lys-139, Leu-166–Val-272, Met-293–Asn-393, and Met-403–Ser-511. 12 disulfides stabilise this stretch: Cys-64–Cys-128, Cys-77–Cys-138, Cys-108–Cys-118, Cys-196–Cys-261, Cys-209–Cys-271, Cys-238–Cys-248, Cys-318–Cys-382, Cys-331–Cys-392, Cys-362–Cys-372, Cys-433–Cys-497, Cys-446–Cys-510, and Cys-479–Cys-489. N-linked (GlcNAc...) asparagine glycosylation occurs at Asn-256. The N-linked (GlcNAc...) asparagine glycan is linked to Asn-468. N-linked (GlcNAc...) asparagine glycosylation is present at Asn-611. A cross-link (lysine tyrosylquinone (Lys-Tyr)) is located at residues Lys-620–Tyr-656. Tyr-656 bears the 2',4',5'-topaquinone mark.

This sequence belongs to the lysyl oxidase family. Cu cation serves as cofactor. Requires lysine tyrosylquinone residue as cofactor. The lysine tyrosylquinone cross-link (LTQ) is generated by condensation of the epsilon-amino group of a lysine with a topaquinone produced by oxidation of tyrosine.

It localises to the secreted. Its subcellular location is the extracellular space. The protein localises to the cytoplasm. It is found in the nucleus. The catalysed reaction is L-lysyl-[protein] + O2 + H2O = (S)-2-amino-6-oxohexanoyl-[protein] + H2O2 + NH4(+). It catalyses the reaction N(6)-acetyl-L-lysyl-[protein] + O2 + H2O = acetamide + (S)-2-amino-6-oxohexanoyl-[protein] + H2O2. Protein-lysine 6-oxidase that mediates the oxidation of peptidyl lysine residues to allysine in target proteins. Catalyzes the post-translational oxidative deamination of peptidyl lysine residues in precursors of elastin and different types of collagens, a prerequisite in the formation of cross-links between collagens and elastin. Can mediate oxidation of lysine residues that are acetylated. Also able to catalyze deacetylation of lysine residues. The polypeptide is Lysyl oxidase homolog 3A (Danio rerio (Zebrafish)).